Consider the following 395-residue polypeptide: Putative 8-amino-7-oxononanoate synthase (395 aa).

Arg-23 is a binding site for substrate. 110–111 (GF) provides a ligand contact to pyridoxal 5'-phosphate. Residue His-135 coordinates substrate. Pyridoxal 5'-phosphate is bound by residues Ser-182, 207–210 (DEAH), and 239–242 (TFSK). Residue Lys-242 is modified to N6-(pyridoxal phosphate)lysine. Thr-356 contacts substrate.

The protein belongs to the class-II pyridoxal-phosphate-dependent aminotransferase family. BioF subfamily. As to quaternary structure, homodimer. Pyridoxal 5'-phosphate serves as cofactor.

It catalyses the reaction 6-carboxyhexanoyl-[ACP] + L-alanine + H(+) = (8S)-8-amino-7-oxononanoate + holo-[ACP] + CO2. Its pathway is cofactor biosynthesis; biotin biosynthesis. Catalyzes the decarboxylative condensation of pimeloyl-[acyl-carrier protein] and L-alanine to produce 8-amino-7-oxononanoate (AON), [acyl-carrier protein], and carbon dioxide. This Bacillus thuringiensis subsp. konkukian (strain 97-27) protein is Putative 8-amino-7-oxononanoate synthase (bioF).